The chain runs to 182 residues: Ribulose bisphosphate carboxylase small subunit, chloroplastic (182 aa).

A chloroplast-targeting transit peptide spans 1–58 (MACSMISSATVAAVSRASPAQSSMVAPFTCLKSTSAFPVTQKTNNDITSIASNGGRVQ).

The protein belongs to the RuBisCO small chain family. As to quaternary structure, heterohexadecamer of 8 large and 8 small subunits.

The protein resides in the plastid. The protein localises to the chloroplast. Functionally, ruBisCO catalyzes two reactions: the carboxylation of D-ribulose 1,5-bisphosphate, the primary event in carbon dioxide fixation, as well as the oxidative fragmentation of the pentose substrate. Both reactions occur simultaneously and in competition at the same active site. Although the small subunit is not catalytic it is essential for maximal activity. In Betula pendula (European white birch), this protein is Ribulose bisphosphate carboxylase small subunit, chloroplastic.